The primary structure comprises 188 residues: ADP-ribosylation factor J (188 aa).

GTP-binding positions include 34–40, 75–79, and 134–137; these read DGAGKST, DVGGQ, and NKQD.

It belongs to the small GTPase superfamily. Arf family.

The protein localises to the golgi apparatus. GTP-binding protein that may be involved in protein trafficking. May modulate vesicle budding and uncoating within the Golgi apparatus. The sequence is that of ADP-ribosylation factor J (arrJ) from Dictyostelium discoideum (Social amoeba).